The primary structure comprises 467 residues: MTHYDVVVLGAGPGGYVAAIRAAQLGLSTAVVEPKYWGGICLNVGCIPSKVLLHNAELAHIFTKEAKTFGISGDASFDYGIAYDRSRKVSEGRVAGVHFLMKKNKITEIHGYGRFTDANTLSVELSEGVPETPLKVTFNNVIIATGSKTRLVPGTLLSTNVITYEEQILTRELPDSIVIVGAGAIGIEFGYVLKNYGVDVTIVEFLPRAMPNEDAEVSKEIEKQFKKMGIKILTGTKVESISDNGSHVLVAVSKDGQFQELKADKVLQAIGFAPNVDGYGLDKVGVALTADKAVDIDDYMQTNVSHIYAIGDVTGKLQLAHVAEAQGVVAAEAIAGAETLALSDYRMMPRATFCQPNVASFGLTEQQARDGGYDVVVAKFPFTANAKAHGMGDPSGFVKLVADAKYGELLGGHMIGHNVSELLPELTLAQKWDLTATELVRNVHTHPTLSEALQECFHGLIGHMINF.

Residues 33 to 41 (EPKYWGGIC), Lys-50, and Gly-113 each bind FAD. Cys-41 and Cys-46 are oxidised to a cystine. Residues 181–185 (GAGAI), Glu-204, and 269–272 (AIGF) contribute to the NAD(+) site. Residues Asp-312 and Ala-320 each contribute to the FAD site. Residue His-446 is the Proton acceptor of the active site.

Belongs to the class-I pyridine nucleotide-disulfide oxidoreductase family. Homodimer. Part of the PDH complex, consisting of multiple copies of AceE (E1), DlaT (E2) and Lpd (E3), and of the BCKADH complex, consisting of multiple copies of BkdA/BkdB (E1), BkdC (E2) and Lpd (E3). It depends on FAD as a cofactor.

The protein resides in the cytoplasm. The catalysed reaction is N(6)-[(R)-dihydrolipoyl]-L-lysyl-[protein] + NAD(+) = N(6)-[(R)-lipoyl]-L-lysyl-[protein] + NADH + H(+). Lipoamide dehydrogenase is a component of the alpha-ketoacid dehydrogenase complexes. Catalyzes the reoxidation of dihydrolipoyl groups which are covalently attached to the lipoate acyltransferase components (E2) of the complexes. This chain is Dihydrolipoyl dehydrogenase (lpd), found in Mycobacterium leprae (strain TN).